The sequence spans 331 residues: Pantothenate kinase (331 aa).

Position 109 to 116 (109 to 116 (GSVAVGKS)) interacts with ATP.

It belongs to the prokaryotic pantothenate kinase family.

It is found in the cytoplasm. It catalyses the reaction (R)-pantothenate + ATP = (R)-4'-phosphopantothenate + ADP + H(+). It functions in the pathway cofactor biosynthesis; coenzyme A biosynthesis; CoA from (R)-pantothenate: step 1/5. In Rhizobium johnstonii (strain DSM 114642 / LMG 32736 / 3841) (Rhizobium leguminosarum bv. viciae), this protein is Pantothenate kinase.